Consider the following 239-residue polypeptide: Endonuclease V (239 aa).

Mg(2+) is bound by residues D50 and D118.

The protein belongs to the endonuclease V family. Mg(2+) is required as a cofactor.

The protein resides in the cytoplasm. It carries out the reaction Endonucleolytic cleavage at apurinic or apyrimidinic sites to products with a 5'-phosphate.. DNA repair enzyme involved in the repair of deaminated bases. Selectively cleaves double-stranded DNA at the second phosphodiester bond 3' to a deoxyinosine leaving behind the intact lesion on the nicked DNA. This is Endonuclease V from Xylella fastidiosa (strain 9a5c).